The sequence spans 370 residues: MLSLNLSESLRIPFQNPRPPKSDFSSTSSSPSSSSRRCVSAYPIPIGFSVRNQYFSRCLTQLRRNESQQLGFRCFQRNDAACYLEKAESEEHDRNLDVLVESSIAHSRREIQRVLMFLAVSGSVALLGTDPAFAASSIPNVTQSLVTSFGDLGDISSGFASAFLLIFFSELGDKTFFIAALLAARNSAATVFVGTFGALGIMTIISVVLGRTFHYVDEVLPFRFGGTDLPIDDIAAVCLLVYFGVSTLLDAVSDEGKADEEQKEAELAVSELSGNGAGIVAAANTIISTFALVFVAEWGDKSFFSTIALAAASSPLGVIAGALAGHGAATLLAVLGGSLLGNFLSEKAIAYVGGVLFLVFAAVTVAEIVT.

Residues Met-1–Cys-38 are disordered. The transit peptide at Met-1–Arg-73 directs the protein to the chloroplast. The segment covering Ser-22–Cys-38 has biased composition (low complexity). The Stromal segment spans residues Cys-74–Arg-113. A helical membrane pass occupies residues Val-114–Ala-134. Topologically, residues Ala-135–Ser-161 are lumenal, thylakoid. Residues Ala-162–Leu-182 traverse the membrane as a helical segment. The Stromal portion of the chain corresponds to Ala-183–Ala-188. A helical transmembrane segment spans residues Ala-189 to Leu-209. At Gly-210–Asp-228 the chain is on the lumenal, thylakoid side. The helical transmembrane segment at Leu-229–Leu-249 threads the bilayer. The Stromal portion of the chain corresponds to Asp-250–Asn-275. The helical transmembrane segment at Gly-276–Ala-296 threads the bilayer. The Lumenal, thylakoid segment spans residues Glu-297–Pro-315. A helical membrane pass occupies residues Leu-316–Gly-336. The Stromal portion of the chain corresponds to Gly-337 to Ala-348. The chain crosses the membrane as a helical span at residues Ile-349 to Val-369. Thr-370 is a topological domain (lumenal, thylakoid).

This sequence belongs to the GDT1 family. As to quaternary structure, homodimer.

It localises to the plastid. The protein resides in the chloroplast membrane. The protein localises to the thylakoid. Mn(2+)/H(+) exchanger, which transport Mn(2+)from the chloroplast stroma into the acidic thylakoid lumen. Might be a chloroplast-localized Ca(2+)/H(+) antiporter. Regulates Ca(2+), Mn(2+) and pH homeostasis. Required for chloroplast development. In Arabidopsis thaliana (Mouse-ear cress), this protein is Protein PAM71, chloroplastic.